Here is a 123-residue protein sequence, read N- to C-terminus: Protein Wnt-3a (123 aa).

S1 carries the O-palmitoleoyl serine lipid modification. C89 and C104 are joined by a disulfide. An N-linked (GlcNAc...) asparagine glycan is attached at N90.

The protein belongs to the Wnt family. Disulfide bonds have critical and distinct roles in secretion and activity. Loss of each conserved cysteine results in high molecular weight oxidized Wnt oligomers, which are formed through inter-Wnt disulfide bonding. Post-translationally, palmitoleoylation is required for efficient binding to frizzled receptors. Depalmitoleoylation leads to Wnt signaling pathway inhibition.

Its subcellular location is the secreted. The protein resides in the extracellular space. It is found in the extracellular matrix. Functionally, ligand for members of the frizzled family of seven transmembrane receptors. Functions in the canonical Wnt signaling pathway that results in activation of transcription factors of the TCF/LEF family. Required for normal embryonic mesoderm development and formation of caudal somites. Required for normal morphogenesis of the developing neural tube. This Plethodon jordani (Red-cheeked salamander) protein is Protein Wnt-3a (WNT-3A).